Here is a 129-residue protein sequence, read N- to C-terminus: Phosphoribosyl-AMP cyclohydrolase (129 aa).

Aspartate 77 contacts Mg(2+). Residue cysteine 78 participates in Zn(2+) binding. 2 residues coordinate Mg(2+): aspartate 79 and aspartate 81. Zn(2+) contacts are provided by cysteine 94 and cysteine 101.

The protein belongs to the PRA-CH family. In terms of assembly, homodimer. Mg(2+) is required as a cofactor. It depends on Zn(2+) as a cofactor.

Its subcellular location is the cytoplasm. It carries out the reaction 1-(5-phospho-beta-D-ribosyl)-5'-AMP + H2O = 1-(5-phospho-beta-D-ribosyl)-5-[(5-phospho-beta-D-ribosylamino)methylideneamino]imidazole-4-carboxamide. The protein operates within amino-acid biosynthesis; L-histidine biosynthesis; L-histidine from 5-phospho-alpha-D-ribose 1-diphosphate: step 3/9. Functionally, catalyzes the hydrolysis of the adenine ring of phosphoribosyl-AMP. This is Phosphoribosyl-AMP cyclohydrolase from Pelotomaculum thermopropionicum (strain DSM 13744 / JCM 10971 / SI).